Consider the following 380-residue polypeptide: Cytochrome b (380 aa).

A run of 4 helical transmembrane segments spans residues 34 to 54 (FGSLLGICLITQILTGLLLAA), 78 to 99 (WLIRNLHANGASFFFICIYLHI), 114 to 134 (WNTGVTLLLTLMATAFVGYVL), and 179 to 199 (FFALHFLLPFMIAGLTLIHLT). Positions 84 and 98 each coordinate heme b. The heme b site is built by His-183 and His-197. His-202 serves as a coordination point for a ubiquinone. The next 4 helical transmembrane spans lie at 227–247 (LKDILGFAIMLLLLTTLALFS), 289–309 (LGGVLALAASVLILFLTPFLH), 321–341 (LSQLLFWLLVANLLILTWVGS), and 348–368 (FIIIGQMASITYFIIILVLFP).

The protein belongs to the cytochrome b family. In terms of assembly, the cytochrome bc1 complex contains 11 subunits: 3 respiratory subunits (MT-CYB, CYC1 and UQCRFS1), 2 core proteins (UQCRC1 and UQCRC2) and 6 low-molecular weight proteins (UQCRH/QCR6, UQCRB/QCR7, UQCRQ/QCR8, UQCR10/QCR9, UQCR11/QCR10 and a cleavage product of UQCRFS1). This cytochrome bc1 complex then forms a dimer. It depends on heme b as a cofactor.

The protein localises to the mitochondrion inner membrane. Its function is as follows. Component of the ubiquinol-cytochrome c reductase complex (complex III or cytochrome b-c1 complex) that is part of the mitochondrial respiratory chain. The b-c1 complex mediates electron transfer from ubiquinol to cytochrome c. Contributes to the generation of a proton gradient across the mitochondrial membrane that is then used for ATP synthesis. The sequence is that of Cytochrome b (MT-CYB) from Pharomachrus antisianus (Crested quetzal).